Consider the following 96-residue polypeptide: Small ribosomal subunit protein bS18 (96 aa).

A compositionally biased stretch (basic and acidic residues) spans 1–22 (MYKDIDSHQRDSRTDGHQDGFK). The disordered stretch occupies residues 1–25 (MYKDIDSHQRDSRTDGHQDGFKKNP).

This sequence belongs to the bacterial ribosomal protein bS18 family. In terms of assembly, part of the 30S ribosomal subunit. Forms a tight heterodimer with protein bS6.

Its function is as follows. Binds as a heterodimer with protein bS6 to the central domain of the 16S rRNA, where it helps stabilize the platform of the 30S subunit. The sequence is that of Small ribosomal subunit protein bS18 from Borrelia duttonii (strain Ly).